Consider the following 338-residue polypeptide: Ketol-acid reductoisomerase (NADP(+)) (338 aa).

The KARI N-terminal Rossmann domain maps to 1–181; the sequence is MQVYYDKDCD…GGGRTGIIET (181 aa). NADP(+) is bound by residues 24–27, R47, S50, S52, and 82–85; these read FGSQ and DEFQ. H107 is an active-site residue. An NADP(+)-binding site is contributed by G133. A KARI C-terminal knotted domain is found at 182–327; the sequence is TFKDETETDL…EKLRSMMPWI (146 aa). The Mg(2+) site is built by D190, E194, E226, and E230. Position 251 (S251) interacts with substrate.

The protein belongs to the ketol-acid reductoisomerase family. Mg(2+) is required as a cofactor.

It carries out the reaction (2R)-2,3-dihydroxy-3-methylbutanoate + NADP(+) = (2S)-2-acetolactate + NADPH + H(+). The catalysed reaction is (2R,3R)-2,3-dihydroxy-3-methylpentanoate + NADP(+) = (S)-2-ethyl-2-hydroxy-3-oxobutanoate + NADPH + H(+). It participates in amino-acid biosynthesis; L-isoleucine biosynthesis; L-isoleucine from 2-oxobutanoate: step 2/4. Its pathway is amino-acid biosynthesis; L-valine biosynthesis; L-valine from pyruvate: step 2/4. Involved in the biosynthesis of branched-chain amino acids (BCAA). Catalyzes an alkyl-migration followed by a ketol-acid reduction of (S)-2-acetolactate (S2AL) to yield (R)-2,3-dihydroxy-isovalerate. In the isomerase reaction, S2AL is rearranged via a Mg-dependent methyl migration to produce 3-hydroxy-3-methyl-2-ketobutyrate (HMKB). In the reductase reaction, this 2-ketoacid undergoes a metal-dependent reduction by NADPH to yield (R)-2,3-dihydroxy-isovalerate. The chain is Ketol-acid reductoisomerase (NADP(+)) from Marinobacter nauticus (strain ATCC 700491 / DSM 11845 / VT8) (Marinobacter aquaeolei).